Reading from the N-terminus, the 123-residue chain is Protein Wnt-7(I) (123 aa).

Serine 1 carries the O-palmitoleoyl serine; by PORCN lipid modification. Cysteine 89 and cysteine 104 are oxidised to a cystine. Asparagine 90 carries N-linked (GlcNAc...) asparagine glycosylation. Residues 121–123 (CKF) carry the Microbody targeting signal motif.

This sequence belongs to the Wnt family. Post-translationally, palmitoleoylation is required for efficient binding to frizzled receptors. Depalmitoleoylation leads to Wnt signaling pathway inhibition.

The protein resides in the secreted. It is found in the extracellular space. Its subcellular location is the extracellular matrix. Its function is as follows. Ligand for members of the frizzled family of seven transmembrane receptors. Probable developmental protein. May be a signaling molecule which affects the development of discrete regions of tissues. Is likely to signal over only few cell diameters. This Eptatretus stoutii (Pacific hagfish) protein is Protein Wnt-7(I) (WNT-7(I)).